Consider the following 152-residue polypeptide: Cuticle protein 64 (152 aa).

7 consecutive repeat copies span residues 27-30 (AAPA), 33-37 (AAPAV), 39-42 (AAPA), 86-89 (AAPV), 92-95 (AAPA), 98-101 (AAPA), and 127-130 (AAPA).

Component of the cuticle of migratory locust which contains more than 100 different structural proteins. The chain is Cuticle protein 64 from Locusta migratoria (Migratory locust).